Consider the following 440-residue polypeptide: Xaa-Pro dipeptidase (440 aa).

Positions 244, 255, 335, 380, and 419 each coordinate Mn(2+).

This sequence belongs to the peptidase M24B family. Bacterial-type prolidase subfamily. Requires Mn(2+) as cofactor.

The catalysed reaction is Xaa-L-Pro dipeptide + H2O = an L-alpha-amino acid + L-proline. Functionally, splits dipeptides with a prolyl residue in the C-terminal position. This is Xaa-Pro dipeptidase from Shewanella putrefaciens (strain CN-32 / ATCC BAA-453).